The primary structure comprises 259 residues: Glucose-1-phosphate thymidylyltransferase (259 aa).

This sequence belongs to the inositol monophosphatase superfamily.

It carries out the reaction dTTP + alpha-D-glucose 1-phosphate + H(+) = dTDP-alpha-D-glucose + diphosphate. Its pathway is antibiotic biosynthesis; streptomycin biosynthesis. This Streptomyces griseus protein is Glucose-1-phosphate thymidylyltransferase (strO).